The sequence spans 100 residues: Proline-rich protein 15-like protein (100 aa).

The tract at residues tyrosine 29–asparagine 51 is disordered.

It belongs to the PRR15 family.

The sequence is that of Proline-rich protein 15-like protein (Prr15l) from Mus musculus (Mouse).